The chain runs to 477 residues: Regulator of G-protein signaling 7 (477 aa).

Residues 37–112 (EKNGIPIRTV…DDGTFYRFQT (76 aa)) form the DEP domain. 2 positions are modified to phosphoserine: serine 229 and serine 241. The segment at 236 to 257 (DIRSHSPTHTPTPETKPPTEDE) is disordered. Threonine 243 is subject to Phosphothreonine. A G protein gamma domain is found at 255 to 316 (EDELHRQIKY…LSDDTTFWEL (62 aa)). In terms of domain architecture, RGS spans 333-448 (GMDEALKDPV…IRSSAYQELL (116 aa)). Residue serine 434 is modified to Phosphoserine.

Interacts with GNB5, forming the RGS7-GNB5 complex. Interacts with GPR158; promotes the GTPase activator activity of the RGS7-GNB5 complex in absence of glycine, in contrast GTPase activator activity of the RGS7-GNB5 complex is inhibited in presence of glycine. Interacts with GPR179. Interacts with PKD1; this prevents rapid proteasomal degradation. Interacts with RGS7BP, leading to regulate the subcellular location of the heterodimer formed with GNB5. Interacts (phosphorylated form) with 14-3-3 protein YWHAQ. Interacts with SNAPIN. Interacts with GNAI1. Interacts with GNAO1, GNAI3 and GNAZ. Palmitoylated. Post-translationally, ubiquitinated, leading to rapid proteasomal degradation. In terms of processing, phosphorylation and subsequent interaction with 14-3-3 proteins inhibits GAP activity. In terms of tissue distribution, brain-specific. Predominantly cerebellar granule cells.

It localises to the cytoplasm. It is found in the cytosol. Its subcellular location is the cell membrane. The protein localises to the membrane. In terms of biological role, GTPase activator component of the RGS7-GNB5 complex that regulates G protein-coupled receptor signaling cascades. The RGS7-GNB5 complex acts as an inhibitor signal transduction by promoting the GTPase activity of G protein alpha subunits, such as GNAO1, thereby driving them into their inactive GDP-bound form. May play a role in synaptic vesicle exocytosis. Glycine-dependent regulation of the RGS7-GNB5 complex by GPR158 affects mood and cognition via its ability to regulate neuronal excitability in L2/L3 pyramidal neurons of the prefrontal cortex. Modulates the activity of potassium channels that are activated by GNAO1 in response to muscarinic acetylcholine receptor M2/CHRM2 signaling. The sequence is that of Regulator of G-protein signaling 7 (Rgs7) from Rattus norvegicus (Rat).